Reading from the N-terminus, the 319-residue chain is Glutathione synthetase (319 aa).

The region spanning 125-311 (KLFTAWFPEL…ITGMLMDAIE (187 aa)) is the ATP-grasp domain. Residue 151–207 (HQEHGDIILKPLDGMGGTSIFRVKQDDPNLSVIIETLTELSSRFCMAQNFLPAIKEG) participates in ATP binding. Mg(2+)-binding residues include Glu-281 and Asn-283.

It belongs to the prokaryotic GSH synthase family. The cofactor is Mg(2+). Mn(2+) serves as cofactor.

The catalysed reaction is gamma-L-glutamyl-L-cysteine + glycine + ATP = glutathione + ADP + phosphate + H(+). It participates in sulfur metabolism; glutathione biosynthesis; glutathione from L-cysteine and L-glutamate: step 2/2. This is Glutathione synthetase from Yersinia pestis.